The chain runs to 391 residues: Bifunctional enzyme IspD/IspF (391 aa).

Positions 1–230 (MLAAGRGKRA…KKKMQMFPDI (230 aa)) are 2-C-methyl-D-erythritol 4-phosphate cytidylyltransferase. Positions 231 to 391 (RTGNGYDVHS…TVLYPGEIPK (161 aa)) are 2-C-methyl-D-erythritol 2,4-cyclodiphosphate synthase. Positions 237 and 239 each coordinate a divalent metal cation. Residues 237 to 239 (DVH) and 263 to 264 (HS) each bind 4-CDP-2-C-methyl-D-erythritol 2-phosphate. Residue His-271 coordinates a divalent metal cation. 4-CDP-2-C-methyl-D-erythritol 2-phosphate-binding positions include 285–287 (DIG), 361–364 (TTNE), Phe-368, and Arg-371.

In the N-terminal section; belongs to the IspD/TarI cytidylyltransferase family. IspD subfamily. This sequence in the C-terminal section; belongs to the IspF family. A divalent metal cation serves as cofactor.

It catalyses the reaction 2-C-methyl-D-erythritol 4-phosphate + CTP + H(+) = 4-CDP-2-C-methyl-D-erythritol + diphosphate. The enzyme catalyses 4-CDP-2-C-methyl-D-erythritol 2-phosphate = 2-C-methyl-D-erythritol 2,4-cyclic diphosphate + CMP. It functions in the pathway isoprenoid biosynthesis; isopentenyl diphosphate biosynthesis via DXP pathway; isopentenyl diphosphate from 1-deoxy-D-xylulose 5-phosphate: step 2/6. The protein operates within isoprenoid biosynthesis; isopentenyl diphosphate biosynthesis via DXP pathway; isopentenyl diphosphate from 1-deoxy-D-xylulose 5-phosphate: step 4/6. Functionally, bifunctional enzyme that catalyzes the formation of 4-diphosphocytidyl-2-C-methyl-D-erythritol from CTP and 2-C-methyl-D-erythritol 4-phosphate (MEP) (IspD), and catalyzes the conversion of 4-diphosphocytidyl-2-C-methyl-D-erythritol 2-phosphate (CDP-ME2P) to 2-C-methyl-D-erythritol 2,4-cyclodiphosphate (ME-CPP) with a corresponding release of cytidine 5-monophosphate (CMP) (IspF). The chain is Bifunctional enzyme IspD/IspF from Bartonella quintana (strain Toulouse) (Rochalimaea quintana).